Consider the following 197-residue polypeptide: Nucleoid occlusion factor SlmA (197 aa).

Residues 7-67 (INRREHILQC…GLIDFIEESL (61 aa)) form the HTH tetR-type domain. The H-T-H motif DNA-binding region spans 30-49 (TTAKLAAEVGVSEAALYRHF).

It belongs to the nucleoid occlusion factor SlmA family. Homodimer. Interacts with FtsZ.

It localises to the cytoplasm. Its subcellular location is the nucleoid. In terms of biological role, required for nucleoid occlusion (NO) phenomenon, which prevents Z-ring formation and cell division over the nucleoid. Acts as a DNA-associated cell division inhibitor that binds simultaneously chromosomal DNA and FtsZ, and disrupts the assembly of FtsZ polymers. SlmA-DNA-binding sequences (SBS) are dispersed on non-Ter regions of the chromosome, preventing FtsZ polymerization at these regions. The protein is Nucleoid occlusion factor SlmA of Shewanella loihica (strain ATCC BAA-1088 / PV-4).